Reading from the N-terminus, the 645-residue chain is Sodium-dependent nutrient amino acid transporter 1 (645 aa).

The interval 1-48 (MELKTMPHNGANGSPQHNNNNNSNNNNNVSSDTKTDNNEKEAQKKDEG) is disordered. The Cytoplasmic segment spans residues 1–51 (MELKTMPHNGANGSPQHNNNNNSNNNNNVSSDTKTDNNEKEAQKKDEGRTN). The span at 18–32 (NNNNNSNNNNNVSSD) shows a compositional bias: low complexity. Positions 33–48 (TKTDNNEKEAQKKDEG) are enriched in basic and acidic residues. Transmembrane regions (helical) follow at residues 52 to 72 (WSNGIEFLMSCISVSVGLGNV), 85 to 105 (GAFLIPYIIVLFLIGKPMYYL), and 138 to 158 (TICIITYYSSLLALTLYYLFV). N-linked (GlcNAc...) asparagine glycans are attached at residues Asn191 and Asn205. A run of 7 helical transmembrane segments spans residues 234 to 254 (IPDWKLTIALFVSWVVIFLVI), 264 to 284 (AAYFLALFPYVVLFALLGRAV), 313 to 333 (AVVQCFFSLAVGCGPIIMFAS), 347 to 367 (IVTTLDTLTSLLGGITIFAIL), 407 to 427 (LFSVLFFFMLFVLGIGSIVAL), 454 to 474 (CGFLMGLVYVTPGGQWILTLV), and 480 to 500 (TYVVFILAIFELSGIVWIYGL). Asn514 is a glycosylation site (N-linked (GlcNAc...) asparagine). The next 2 membrane-spanning stretches (helical) occupy residues 522–542 (CWSFFTPVMMIVIFIYSMATI) and 559–579 (AGWLLFAVGAAQFPLWGWWYI).

The protein belongs to the sodium:neurotransmitter symporter (SNF) (TC 2.A.22) family.

It is found in the membrane. In terms of biological role, unusual broad substrate spectrum amino acid:sodium cotransporter that promotes absorption of the D isomers of essential amino acids. Neutral amino acids are the preferred substrates, especially methionine and phenylalanine. This Drosophila mojavensis (Fruit fly) protein is Sodium-dependent nutrient amino acid transporter 1.